A 498-amino-acid polypeptide reads, in one-letter code: ATP synthase subunit beta, chloroplastic (498 aa).

172 to 179 lines the ATP pocket; sequence GGAGVGKT.

The protein belongs to the ATPase alpha/beta chains family. F-type ATPases have 2 components, CF(1) - the catalytic core - and CF(0) - the membrane proton channel. CF(1) has five subunits: alpha(3), beta(3), gamma(1), delta(1), epsilon(1). CF(0) has four main subunits: a(1), b(1), b'(1) and c(9-12).

The protein resides in the plastid. Its subcellular location is the chloroplast thylakoid membrane. The enzyme catalyses ATP + H2O + 4 H(+)(in) = ADP + phosphate + 5 H(+)(out). Produces ATP from ADP in the presence of a proton gradient across the membrane. The catalytic sites are hosted primarily by the beta subunits. The chain is ATP synthase subunit beta, chloroplastic from Cinnamomum camphora (Camphor tree).